Here is a 147-residue protein sequence, read N- to C-terminus: uncharacterized protein (147 aa).

Helical transmembrane passes span 42 to 62 (WASL…SPEP) and 64 to 84 (LILQ…ATAF).

It is found in the cell membrane. This is an uncharacterized protein from Bacillus subtilis (strain 168).